The following is a 157-amino-acid chain: Beta-defensin 125 (157 aa).

The N-terminal stretch at 1–20 is a signal peptide; that stretch reads MNILMLTFIICGLLTQVTKG. Disulfide bonds link Cys-27–Cys-55, Cys-35–Cys-49, and Cys-39–Cys-56. The tract at residues 109-157 is disordered; the sequence is GETMTPETNTPETTVPPSETTTPETTMPPSETATSETMPPPSQTALTHN. Residues 110-145 are compositionally biased toward low complexity; that stretch reads ETMTPETNTPETTVPPSETTTPETTMPPSETATSET.

Belongs to the beta-defensin family.

The protein localises to the secreted. Its function is as follows. Has antibacterial activity. This Gorilla gorilla gorilla (Western lowland gorilla) protein is Beta-defensin 125 (DEFB125).